The primary structure comprises 461 residues: Cyclin-A2-4 (461 aa).

The protein belongs to the cyclin family. Cyclin AB subfamily.

This chain is Cyclin-A2-4 (CYCA2-4), found in Arabidopsis thaliana (Mouse-ear cress).